The chain runs to 196 residues: Neurensin-1 (196 aa).

2 helical membrane passes run 67–87 and 121–141; these read LISG…GFLV and AVLF…SVFA.

Belongs to the VMP family. Expressed predominantly in brain. Also weakly expressed in lung and spleen. In brain, expressed strongly in nerve fibers of the cerebral cortex, anterior cerebral nuclei, hypothalamus, amygdaloid complex, brain stem of the metaencephalon and medulla oblongata, and moderately expressed in soma of neurons of the dentate gyrus of the hippocampus and Purkinje cells of the cerebellum.

Its subcellular location is the membrane. The protein localises to the cell projection. It is found in the neuron projection. May play an important role in neural organelle transport, and in transduction of nerve signals or in nerve growth. May play a role in neurite extension. The polypeptide is Neurensin-1 (Mus musculus (Mouse)).